The chain runs to 535 residues: Butyrophilin-like protein 9 (535 aa).

The signal sequence occupies residues 1–34 (MVDLSVSPDSLKPVSLTSSLVFLMHLLLLQPGEP). Residues 35–256 (SSEVKVLGPE…VFVPGASAWK (222 aa)) are Extracellular-facing. Residues 54 to 135 (EVEFPCHLWP…SDKGTYGCRF (82 aa)) enclose the Ig-like V-type domain. A disulfide bond links Cys-59 and Cys-133. N-linked (GlcNAc...) asparagine glycans are attached at residues Asn-102, Asn-139, and Asn-224. A helical transmembrane segment spans residues 257 to 277 (SAFVATLPLLLVLAALALGVL). Positions 276-315 (VLRKQRRSREKLRKQAEKRQEKLTAELEKLQTELDWRRAE) form a coiled coil. The Cytoplasmic portion of the chain corresponds to 278–535 (RKQRRSREKL…EPADPALDWW (258 aa)). Residues 310 to 509 (DWRRAEGQAE…LTICPLPVRG (200 aa)) enclose the B30.2/SPRY domain. A disordered region spans residues 340–367 (SLEVSEDGKSVSSRGAPPGPAPGHPQRF).

The protein belongs to the immunoglobulin superfamily. BTN/MOG family.

Its subcellular location is the membrane. The chain is Butyrophilin-like protein 9 (BTNL9) from Homo sapiens (Human).